A 311-amino-acid chain; its full sequence is Manganese-dependent inorganic pyrophosphatase (311 aa).

Residues H10, D14, D16, D75, H97, and D149 each coordinate Mn(2+).

This sequence belongs to the PPase class C family. In terms of assembly, homodimer. Requires Mn(2+) as cofactor.

It catalyses the reaction diphosphate + H2O = 2 phosphate + H(+). The protein is Manganese-dependent inorganic pyrophosphatase (ppaC) of Methanothrix thermoacetophila (strain DSM 6194 / JCM 14653 / NBRC 101360 / PT) (Methanosaeta thermophila).